We begin with the raw amino-acid sequence, 274 residues long: Nickel/cobalt efflux system RcnA (274 aa).

The Periplasmic portion of the chain corresponds to 1–12 (MTEFTTLLQQGN). A helical membrane pass occupies residues 13 to 33 (AWFFIPSAILLGALHGLEPGH). The Cytoplasmic portion of the chain corresponds to 34-56 (SKTMMAAFIIAIKGTIKQAVMLG). A helical membrane pass occupies residues 57–77 (LAATISHTAVVWLIAFGGMVI). The Periplasmic segment spans residues 78 to 86 (SKRFTAQSA). A helical transmembrane segment spans residues 87–107 (EPWLQLISAVIIISTAFWMFW). Residues 108-174 (RTWRGERNWL…FDGREVTNWQ (67 aa)) are Cytoplasmic-facing. Positions 127 to 137 (HHHHDHEDHHD) are enriched in basic and acidic residues. Residues 127–153 (HHHHDHEDHHDHGHHHHHEHGEYQDAH) are disordered. The helical transmembrane segment at 175–195 (ILLFGLTGGLIPCPAAITVLL) threads the bilayer. The Periplasmic portion of the chain corresponds to 196 to 209 (ICIQLKALTLGATL). A helical membrane pass occupies residues 210-230 (VVSFSLGLALTLVTVGVGAAI). The Cytoplasmic portion of the chain corresponds to 231-251 (SVQQVAKRWSGFNTLAKRAPY). Residues 252-272 (FSSLLIGLVGVYMGVHGFMGI) traverse the membrane as a helical segment. The Periplasmic portion of the chain corresponds to 273-274 (MR).

The protein belongs to the NiCoT transporter (TC 2.A.52) family. RcnA subfamily.

It is found in the cell inner membrane. In terms of biological role, efflux system for nickel and cobalt. This is Nickel/cobalt efflux system RcnA (rcnA) from Escherichia coli O1:K1 / APEC.